We begin with the raw amino-acid sequence, 171 residues long: MQNKRDSYTREDLLASSQGELWPQGPQLPAPNMLMMDRITKMSETEGDFGKGLILAELDITPDLWFFDCHFPGDPVMPGCLGLDAMWQLVGFFLGWVGGKGKGRALGVGEVKFTGQILPTAKKVTYEIHMKRVVNRKLVMGLADGRVCVDGKEIYVAKDLKVGLFQDTSSF.

Residue histidine 70 is part of the active site.

It belongs to the thioester dehydratase family. FabA subfamily. As to quaternary structure, homodimer.

It is found in the cytoplasm. The enzyme catalyses a (3R)-hydroxyacyl-[ACP] = a (2E)-enoyl-[ACP] + H2O. It catalyses the reaction (3R)-hydroxydecanoyl-[ACP] = (2E)-decenoyl-[ACP] + H2O. The catalysed reaction is (2E)-decenoyl-[ACP] = (3Z)-decenoyl-[ACP]. The protein operates within lipid metabolism; fatty acid biosynthesis. Necessary for the introduction of cis unsaturation into fatty acids. Catalyzes the dehydration of (3R)-3-hydroxydecanoyl-ACP to E-(2)-decenoyl-ACP and then its isomerization to Z-(3)-decenoyl-ACP. Can catalyze the dehydratase reaction for beta-hydroxyacyl-ACPs with saturated chain lengths up to 16:0, being most active on intermediate chain length. The polypeptide is 3-hydroxydecanoyl-[acyl-carrier-protein] dehydratase (Vibrio campbellii (strain ATCC BAA-1116)).